A 522-amino-acid chain; its full sequence is Cytochrome bd-I ubiquinol oxidase subunit 1 (522 aa).

M1 carries the post-translational modification N-formylmethionine. Over 1-22 (MLDIVELSRLQFALTAMYHFLF) the chain is Cytoplasmic. H19 contacts heme b. The chain crosses the membrane as a helical span at residues 23 to 42 (VPLTLGMAFLLAIMETVYVL). Residues 43–94 (SGKQIYKDMTKFWGKLFGINFALGVATGLTMEFQFGTNWSYYSHYVGDIFGA) lie on the Periplasmic side of the membrane. A helical transmembrane segment spans residues 95-114 (PLAIEGLMAFFLESTFVGLF). Residues 115–129 (FFGWDRLGKVQHMCV) lie on the Cytoplasmic side of the membrane. The chain crosses the membrane as a helical span at residues 130 to 149 (TWLVALGSNLSALWILVANG). The Periplasmic segment spans residues 150–187 (WMQNPIASDFNFETMRMEMVSFSELVLNPVAQVKFVHT). H186 contributes to the heme b binding site. A helical membrane pass occupies residues 188–207 (VASGYVTGAMFILGISAWYM). Residues 208-219 (LKGRDFAFAKRS) lie on the Cytoplasmic side of the membrane. The helical transmembrane segment at 220–239 (FAIAASFGMAAVLSVIVLGD) threads the bilayer. The Periplasmic portion of the chain corresponds to 240–392 (ESGYEMGDVQ…VAPLYFAFRI (153 aa)). Residue M393 participates in heme b binding. The helical transmembrane segment at 393–412 (MVACGFLLLAIIALSFWSVI) threads the bilayer. Residues 413 to 470 (RNRIGEKKWLLRAALYGIPLPWIAVEAGWFVAEYGRQPWAIGEVLPTAVANSSLTAGD) are Cytoplasmic-facing. The chain crosses the membrane as a helical span at residues 471–490 (LIFSMVLICGLYTLFLVAEL). Residues 491 to 522 (FLMFKFARLGPSSLKTGRYHFEQSSTTTQPAR) are Periplasmic-facing.

This sequence belongs to the cytochrome ubiquinol oxidase subunit 1 family. Heterodimer of subunits I and II. Heme b serves as cofactor. The cofactor is heme d cis-diol.

The protein resides in the cell inner membrane. The enzyme catalyses 2 a ubiquinol + O2(in) + 4 H(+)(in) = 2 a ubiquinone + 2 H2O(in) + 4 H(+)(out). It participates in energy metabolism; oxidative phosphorylation. Its function is as follows. A terminal oxidase that produces a proton motive force by the vectorial transfer of protons across the inner membrane. It is the component of the aerobic respiratory chain of E.coli that predominates when cells are grown at low aeration. Generates a proton motive force using protons and electrons from opposite sides of the membrane to generate H(2)O, transferring 1 proton/electron. The protein is Cytochrome bd-I ubiquinol oxidase subunit 1 (cydA) of Escherichia coli O6:H1 (strain CFT073 / ATCC 700928 / UPEC).